The following is an 815-amino-acid chain: Probable bifunctional folylpolyglutamate synthase/dihydropteroate synthase (815 aa).

The tract at residues 1–416 (MRYDEAANFL…LVAGSLFAVA (416 aa)) is folylpolyglutamate synthase. 47–53 (GSNGKGS) is a binding site for ATP. Residues 553 to 803 (TAVMGILNVT…DVPENVAAVR (251 aa)) form the Pterin-binding domain. The tract at residues 555-815 (VMGILNVTPD…EATRTGADAE (261 aa)) is DHPS. Residue Asn560 participates in Mg(2+) binding. (7,8-dihydropterin-6-yl)methyl diphosphate is bound by residues Thr600, Asp633, Asn652, Asp722, Lys758, and 791 to 793 (RVH).

In the N-terminal section; belongs to the folylpolyglutamate synthase family. It in the C-terminal section; belongs to the DHPS family. Requires Mg(2+) as cofactor.

It carries out the reaction (6S)-5,6,7,8-tetrahydrofolyl-(gamma-L-Glu)(n) + L-glutamate + ATP = (6S)-5,6,7,8-tetrahydrofolyl-(gamma-L-Glu)(n+1) + ADP + phosphate + H(+). The catalysed reaction is (7,8-dihydropterin-6-yl)methyl diphosphate + 4-aminobenzoate = 7,8-dihydropteroate + diphosphate. It participates in cofactor biosynthesis; tetrahydrofolylpolyglutamate biosynthesis. The protein operates within cofactor biosynthesis; tetrahydrofolate biosynthesis; 7,8-dihydrofolate from 2-amino-4-hydroxy-6-hydroxymethyl-7,8-dihydropteridine diphosphate and 4-aminobenzoate: step 1/2. Functionally, can complement an H.volcanii mutant strain that is thymidine auxotroph because it lacks the two dihydrofolate reductase genes encoded by hdrA and hdrB. The sequence is that of Probable bifunctional folylpolyglutamate synthase/dihydropteroate synthase (folP) from Halobacterium salinarum (strain ATCC 700922 / JCM 11081 / NRC-1) (Halobacterium halobium).